A 461-amino-acid chain; its full sequence is Cysteine--tRNA ligase (461 aa).

Residue Cys30 participates in Zn(2+) binding. A 'HIGH' region motif is present at residues 32 to 42 (VTIYDLCHIGH). Residues Cys211, His236, and Glu240 each contribute to the Zn(2+) site. The short motif at 268–272 (KMSKS) is the 'KMSKS' region element. Residue Lys271 coordinates ATP.

This sequence belongs to the class-I aminoacyl-tRNA synthetase family. Monomer. Zn(2+) serves as cofactor.

Its subcellular location is the cytoplasm. It carries out the reaction tRNA(Cys) + L-cysteine + ATP = L-cysteinyl-tRNA(Cys) + AMP + diphosphate. The sequence is that of Cysteine--tRNA ligase from Shewanella sp. (strain W3-18-1).